A 250-amino-acid chain; its full sequence is uncharacterized protein (250 aa).

Positions methionine 1–alanine 17 are cleaved as a signal peptide. Asparagine 48, asparagine 159, asparagine 223, and asparagine 239 each carry an N-linked (GlcNAc...) asparagine glycan.

It localises to the secreted. This is an uncharacterized protein from Caenorhabditis elegans.